The chain runs to 298 residues: GTP cyclohydrolase FolE2 (298 aa).

Belongs to the GTP cyclohydrolase IV family.

It carries out the reaction GTP + H2O = 7,8-dihydroneopterin 3'-triphosphate + formate + H(+). The protein operates within cofactor biosynthesis; 7,8-dihydroneopterin triphosphate biosynthesis; 7,8-dihydroneopterin triphosphate from GTP: step 1/1. Converts GTP to 7,8-dihydroneopterin triphosphate. The chain is GTP cyclohydrolase FolE2 from Xylella fastidiosa (strain M12).